The primary structure comprises 201 residues: Orotate phosphoribosyltransferase (201 aa).

A 5-phospho-alpha-D-ribose 1-diphosphate-binding site is contributed by 113-121 (EDIITTGKS). Orotate is bound by residues threonine 117 and arginine 145.

This sequence belongs to the purine/pyrimidine phosphoribosyltransferase family. PyrE subfamily. As to quaternary structure, homodimer. The cofactor is Mg(2+).

The catalysed reaction is orotidine 5'-phosphate + diphosphate = orotate + 5-phospho-alpha-D-ribose 1-diphosphate. Its pathway is pyrimidine metabolism; UMP biosynthesis via de novo pathway; UMP from orotate: step 1/2. Functionally, catalyzes the transfer of a ribosyl phosphate group from 5-phosphoribose 1-diphosphate to orotate, leading to the formation of orotidine monophosphate (OMP). The sequence is that of Orotate phosphoribosyltransferase from Helicobacter pylori (strain ATCC 700392 / 26695) (Campylobacter pylori).